Reading from the N-terminus, the 155-residue chain is Putative pre-16S rRNA nuclease (155 aa).

Belongs to the YqgF nuclease family.

The protein resides in the cytoplasm. In terms of biological role, could be a nuclease involved in processing of the 5'-end of pre-16S rRNA. This chain is Putative pre-16S rRNA nuclease, found in Xylella fastidiosa (strain M23).